The primary structure comprises 509 residues: Lengsin (509 aa).

The interval 1–34 (MNNEEDLLQEDSTRDEGNETEANSMNTLRRTRKK) is disordered. Residues 83 to 177 (NRLQFVRFEA…VICDTFTVTG (95 aa)) form the GS beta-grasp domain. A GS catalytic domain is found at 184-509 (PRYIAKRQLS…ERNKFLEYFI (326 aa)).

It belongs to the glutamine synthetase family. Dodecamer. Interacts with BFSP2 and VIM. In terms of tissue distribution, abundantly expressed in lens.

Functionally, may act as a component of the cytoskeleton or as a chaperone for the reorganization of intermediate filament proteins during terminal differentiation in the lens. Does not seem to have enzymatic activity. The chain is Lengsin (LGSN) from Homo sapiens (Human).